A 228-amino-acid polypeptide reads, in one-letter code: 3-dehydroquinate dehydratase (228 aa).

Residues serine 26, glutamate 51–arginine 53, and arginine 84 each bind 3-dehydroquinate. Residue histidine 127 is the Proton donor/acceptor of the active site. Lysine 150 (schiff-base intermediate with substrate) is an active-site residue. 3-dehydroquinate-binding residues include arginine 190, threonine 209, and glutamine 213.

It belongs to the type-I 3-dehydroquinase family. In terms of assembly, homodimer.

It catalyses the reaction 3-dehydroquinate = 3-dehydroshikimate + H2O. The protein operates within metabolic intermediate biosynthesis; chorismate biosynthesis; chorismate from D-erythrose 4-phosphate and phosphoenolpyruvate: step 3/7. Its function is as follows. Involved in the third step of the chorismate pathway, which leads to the biosynthesis of aromatic amino acids. Catalyzes the cis-dehydration of 3-dehydroquinate (DHQ) and introduces the first double bond of the aromatic ring to yield 3-dehydroshikimate. In Thermoplasma acidophilum (strain ATCC 25905 / DSM 1728 / JCM 9062 / NBRC 15155 / AMRC-C165), this protein is 3-dehydroquinate dehydratase.